A 274-amino-acid chain; its full sequence is 5'-3' exoribonuclease (274 aa).

Residues histidine 8, histidine 10, aspartate 15, histidine 40, glutamate 65, histidine 76, histidine 190, aspartate 247, and histidine 249 each contribute to the Mn(2+) site.

The protein belongs to the PHP family. TrpH/YciV subfamily. Mn(2+) is required as a cofactor.

It catalyses the reaction a ribonucleoside 3',5'-bisphosphate + H2O = a ribonucleoside 5'-phosphate + phosphate. Efficiently catalyzes the hydrolysis of the 3'-phosphate from 3',5'-bis-phosphonucleotides as well as the successive hydrolysis of 5'-phosphomononucleotides from the 5'-end of short pieces of RNA and DNA, with no specificity toward the identity of the nucleotide base. Is more efficient at hydrolyzing RNA oligonucleotides than DNA oligonucleotides. This enzyme can also hydrolyze annealed DNA duplexes, albeit at a catalytic efficiency lower than that of the corresponding single-stranded oligonucleotides. The sequence is that of 5'-3' exoribonuclease from Haemophilus influenzae (strain ATCC 51907 / DSM 11121 / KW20 / Rd).